The primary structure comprises 452 residues: UDP-N-acetylmuramoylalanine--D-glutamate ligase (452 aa).

113–119 (GTNGKTT) is an ATP binding site.

Belongs to the MurCDEF family.

Its subcellular location is the cytoplasm. The enzyme catalyses UDP-N-acetyl-alpha-D-muramoyl-L-alanine + D-glutamate + ATP = UDP-N-acetyl-alpha-D-muramoyl-L-alanyl-D-glutamate + ADP + phosphate + H(+). Its pathway is cell wall biogenesis; peptidoglycan biosynthesis. Its function is as follows. Cell wall formation. Catalyzes the addition of glutamate to the nucleotide precursor UDP-N-acetylmuramoyl-L-alanine (UMA). The polypeptide is UDP-N-acetylmuramoylalanine--D-glutamate ligase (murD) (Synechocystis sp. (strain ATCC 27184 / PCC 6803 / Kazusa)).